The chain runs to 258 residues: Proteasome subunit alpha (258 aa).

This sequence belongs to the peptidase T1A family. In terms of assembly, the 20S proteasome core is composed of 14 alpha and 14 beta subunits that assemble into four stacked heptameric rings, resulting in a barrel-shaped structure. The two inner rings, each composed of seven catalytic beta subunits, are sandwiched by two outer rings, each composed of seven alpha subunits. The catalytic chamber with the active sites is on the inside of the barrel. Has a gated structure, the ends of the cylinder being occluded by the N-termini of the alpha-subunits. Is capped at one or both ends by the proteasome regulatory ATPase, PAN.

Its subcellular location is the cytoplasm. With respect to regulation, the formation of the proteasomal ATPase PAN-20S proteasome complex, via the docking of the C-termini of PAN into the intersubunit pockets in the alpha-rings, triggers opening of the gate for substrate entry. Interconversion between the open-gate and close-gate conformations leads to a dynamic regulation of the 20S proteasome proteolysis activity. Component of the proteasome core, a large protease complex with broad specificity involved in protein degradation. The chain is Proteasome subunit alpha from Aeropyrum pernix (strain ATCC 700893 / DSM 11879 / JCM 9820 / NBRC 100138 / K1).